Consider the following 324-residue polypeptide: MTSTLIPKETSTPGGRDLRDARADYFFKLLLTAAVAFVLIALVSAALSMLWGGRQALQLQGVSFFYSTEWNPVENKYGALTPIYGTIVTALIAMLIAVPVSFGIAFFLTEVAPRWLRRPVGTAIELLAGIPSIIYGMWGLFVLVPVMTDYITPFLNDHIGTLPLIGTLFQGPPLGIGTLSAGFVLAIMVIPFISSIMREVFLTVPTQLKESAYALGSTKWEVSWNIVLPYTRSAVIGGMFLGLGRALGETMAVAFVIGNSVRLSPSLLTPGTTIAALIANDFGEATESYRSALLLLGFVLFIVTFAVLVIARLMLLRLSRKEGN.

6 consecutive transmembrane segments (helical) span residues 29-49 (LLLT…ALSM), 87-107 (IVTA…IAFF), 126-146 (LLAG…LVPV), 173-193 (PLGI…IPFI), 235-255 (VIGG…AVAF), and 291-311 (SALL…LVIA). The region spanning 83 to 311 (IYGTIVTALI…IVTFAVLVIA (229 aa)) is the ABC transmembrane type-1 domain.

The protein belongs to the binding-protein-dependent transport system permease family. CysTW subfamily.

The protein resides in the cell inner membrane. Functionally, part of a binding-protein-dependent transport system for phosphate; probably responsible for the translocation of the substrate across the membrane. This Xylella fastidiosa (strain 9a5c) protein is Phosphate transport system permease protein PstC (pstC).